A 270-amino-acid polypeptide reads, in one-letter code: 3-methyl-2-oxobutanoate hydroxymethyltransferase (270 aa).

Positions 41 and 80 each coordinate Mg(2+). Residues 41–42, D80, and K109 contribute to the 3-methyl-2-oxobutanoate site; that span reads DS. E111 contacts Mg(2+). The active-site Proton acceptor is the E178.

It belongs to the PanB family. Homodecamer; pentamer of dimers. Mg(2+) serves as cofactor.

It localises to the cytoplasm. The catalysed reaction is 3-methyl-2-oxobutanoate + (6R)-5,10-methylene-5,6,7,8-tetrahydrofolate + H2O = 2-dehydropantoate + (6S)-5,6,7,8-tetrahydrofolate. The protein operates within cofactor biosynthesis; (R)-pantothenate biosynthesis; (R)-pantoate from 3-methyl-2-oxobutanoate: step 1/2. In terms of biological role, catalyzes the reversible reaction in which hydroxymethyl group from 5,10-methylenetetrahydrofolate is transferred onto alpha-ketoisovalerate to form ketopantoate. The protein is 3-methyl-2-oxobutanoate hydroxymethyltransferase of Thermotoga sp. (strain RQ2).